The chain runs to 197 residues: Transcription factor FapR (197 aa).

The protein belongs to the FapR family.

Transcriptional factor involved in regulation of membrane lipid biosynthesis by repressing genes involved in fatty acid and phospholipid metabolism. The polypeptide is Transcription factor FapR (Bacillus cereus (strain B4264)).